The chain runs to 1018 residues: MSFRSPGAPTARMPRRSRLLAPVGAAVVVIIAGIMFAANFWTEYRWFGSVGYTTVFWTELRTRALLFAGGALLMALAVGLSVYFAYRTRPAYRPFSLEQQGLDRYRSSIDPHRKVFFWGLVGGLALLTGASATAEWQTFLQFANATKFGAQDAQFGLDISFYTFTYPFLQVIIGYLYTAVVIAFIAGVVVHYLYGGVRLQAQGQRVTPAARVHLSVLLGVFLLLRAADYWLEQYGLVFSNRGYTFGASYTDVNAVLYAKIILFFIALVCAVLFFANIYFKNARVPLVSLGLMVLSAILIGGVYPAIVQQVTVSPNEQRLERPYIQRNIEATRAAYGIDGAEVIDYDAQTELTTAELAAEAETIPSVRLVDPAVVSQTFQQLQQVRGFYQFPQVLEVDRYTTSDGETVDTIVAARELDGPPSQEDRWLTRHLVYTHGFGMVAAAGNQVDSEGRPVFLEYNIPPTGELSQVGEGYEPRIYFGREGAEYVIVNAEAEYDYPVDPDTPEVPTTEDAVVPTPSPSPEADEAPAPADSREEGSAQEQQDQEGQDGGEDAQGTEEEQSGQGSGQANNYYDGKGGVQLKSFFDKLMYALKYQEINILLNNAISNESQIIYVRDPAERVEKVAPFLTVDGKAYPAVVDGRIVWIVDAYTTSDRYPYSTPIDLAQATTDTFTESTTAVNALPGNRVNYIRNSVKATVDAYDGTVTLYGWDEEDPVLQTWSKAFPGVVTSKDEISDTLLSHLRYPDDLYKVQREILERYHITNADAFYGGQDFWTVPNDPKPQAGNNPEPPYRQTIRFPGDDTPTYSLTSTFVPRGRENLAAFMAVNSDASSEDYGQMRILELPRSTAVQGPGQIQNTFQSSAEVREVLLPLEQSSAQVTYGNLLTLPFAGGLLYVEPLYVQAGGSDASYPLLQQVLVGFGDQVAIGSNLQEALNNLFDGDEAPLEEPTTDGEAREEEEQPQASSDLAQALEDAAEAYEEGQAALREGDFAAYGEANERLKEALDRAKAASGSNEEKDE.

7 helical membrane passes run 20 to 40, 64 to 84, 115 to 135, 171 to 191, 212 to 232, 254 to 274, and 287 to 307; these read LAPV…AANF, ALLF…SVYF, VFFW…ATAE, VIIG…VVVH, VHLS…YWLE, AVLY…VLFF, and VSLG…PAIV. Disordered stretches follow at residues 497-570 and 939-965; these read YPVD…QANN and GDEA…ASSD. Acidic residues-rich tracts occupy residues 542 to 560 and 939 to 959; these read QDQE…EEEQ and GDEA…EEEQ.

Belongs to the UPF0182 family.

Its subcellular location is the cell membrane. The sequence is that of UPF0182 protein Tfu_0541 from Thermobifida fusca (strain YX).